Here is a 115-residue protein sequence, read N- to C-terminus: Con-Ins G1a (115 aa).

The first 24 residues, 1–24 (MTTSSYFLLMALGLLLYVCQSSFG), serve as a signal peptide directing secretion. Positions 25–29 (NQHTR) are excised as a propeptide. The residue at position 34 (proline 34) is a 4-hydroxyproline; partial. 3 cysteine pairs are disulfide-bonded: cysteine 38/cysteine 101, cysteine 50/cysteine 114, and cysteine 100/cysteine 105. A 4-carboxyglutamate modification is found at glutamate 41. Positions 53-94 (KRNDAGEKRGRASPLWQRRGSLSKLKARAKRNGAFHLPRDGR) are cleaved as a propeptide — c peptide. The residue at position 98 (glutamate 98) is a 4-carboxyglutamate. A 4-hydroxyproline; partial modification is found at proline 104. At glutamate 109 the chain carries 4-carboxyglutamate; partial. Cysteine 114 is subject to Cysteine amide.

The protein belongs to the insulin family. Heterodimer of A and B chains; disulfide-linked. Expressed by the venom gland.

It is found in the secreted. In terms of biological role, this venom insulin, from a fish-hunting cone snail, facilitates prey capture by rapidly inducing hypoglycemic shock. It is one of the smallest known insulin found in nature and lacks the C-terminal segment of the B chain that, in human insulin, mediates engagement of the insulin receptor (INSR) and assembly of the hormone's hexameric storage form. Despite lacking this segment, it both binds and activates human insulin receptor (long isoform (HIR-B)) with a high potency (EC(50)=16.28 nM). In vivo, intraperitoneal injection of this peptide into zebrafish lowers blood glucose with the same potency than human insulin. In addition, when applied to water, this peptide reduces overall locomotor activity of zebrafish larvae, observed as a significant decrease in the percentage of time spent swimming and movement frequency. When tested on a mouse model of diabetes, this insulin also lowers blood glucose with a 10-fold lower potency than human insulin. The sequence is that of Con-Ins G1a from Conus geographus (Geography cone).